A 190-amino-acid chain; its full sequence is Protein GrpE (190 aa).

The span at 1-31 (MTETPNTSSEEIQTSEPSSDNELQTLQQENA) shows a compositional bias: polar residues. A disordered region spans residues 1–34 (MTETPNTSSEEIQTSEPSSDNELQTLQQENANLK).

Belongs to the GrpE family. Homodimer.

Its subcellular location is the cytoplasm. In terms of biological role, participates actively in the response to hyperosmotic and heat shock by preventing the aggregation of stress-denatured proteins, in association with DnaK and GrpE. It is the nucleotide exchange factor for DnaK and may function as a thermosensor. Unfolded proteins bind initially to DnaJ; upon interaction with the DnaJ-bound protein, DnaK hydrolyzes its bound ATP, resulting in the formation of a stable complex. GrpE releases ADP from DnaK; ATP binding to DnaK triggers the release of the substrate protein, thus completing the reaction cycle. Several rounds of ATP-dependent interactions between DnaJ, DnaK and GrpE are required for fully efficient folding. The polypeptide is Protein GrpE (Chlamydia muridarum (strain MoPn / Nigg)).